Reading from the N-terminus, the 342-residue chain is Protein FDO1 (342 aa).

3 disordered regions span residues 1-36 (MEENKLSGNKPIQLATWSNQMGSPENNGNNANNGSD), 57-76 (MSPMEEEHSQPSSSQETLSV), and 299-322 (GRTITHNRPNTKDESIQDSHGNRT). Residues 15 to 25 (ATWSNQMGSPE) show a composition bias toward polar residues. The span at 308-319 (NTKDESIQDSHG) shows a compositional bias: basic and acidic residues.

Interacts with FKH1.

In concert with FKH1, plays a role in directionality of mating type switching by controlling which donor mating-type locus is inserted into MAT locus during mating type switching. In Saccharomyces cerevisiae (strain ATCC 204508 / S288c) (Baker's yeast), this protein is Protein FDO1.